The chain runs to 197 residues: Casparian strip membrane protein 4 (197 aa).

Topologically, residues 1 to 34 (MMSSTTIDVPAESSNVAKGKAVLVAAPRPGGWKK) are cytoplasmic. The helical transmembrane segment at 35–55 (GIAIVDFVLRLGAVAAALGAA) threads the bilayer. Over 56-85 (TTMATADQTLPFFTQFFQFEASYDSFTTFQ) the chain is Extracellular. A helical transmembrane segment spans residues 86–106 (FFVITMALVGCYLVLSLPLSI). Residues 107-118 (VSIIRPHALGPK) are Cytoplasmic-facing. Residues 119-139 (LFLIILDTVFLTLATASAASA) traverse the membrane as a helical segment. At 140-171 (AAVVYVAHNGNQDSNWLAICNQFGDFCAQTSG) the chain is on the extracellular side. The chain crosses the membrane as a helical span at residues 172-192 (AVVSSLVAVVVFVLLIVMSAL). At 193-197 (ALGKH) the chain is on the cytoplasmic side.

Belongs to the Casparian strip membrane proteins (CASP) family. As to quaternary structure, homodimer and heterodimers.

It localises to the cell membrane. Its function is as follows. Regulates membrane-cell wall junctions and localized cell wall deposition. Required for establishment of the Casparian strip membrane domain (CSD) and the subsequent formation of Casparian strips, a cell wall modification of the root endodermis that determines an apoplastic barrier between the intraorganismal apoplasm and the extraorganismal apoplasm and prevents lateral diffusion. This is Casparian strip membrane protein 4 from Lotus japonicus (Lotus corniculatus var. japonicus).